A 221-amino-acid polypeptide reads, in one-letter code: Phosphate-specific transport system accessory protein PhoU homolog 1 (221 aa).

Belongs to the PhoU family. As to quaternary structure, homodimer.

Its subcellular location is the cytoplasm. Plays a role in the regulation of phosphate uptake. In this role, it may bind, possibly as a chaperone, to PhoR, PhoP or a PhoR-PhoP complex to promote dephosphorylation of phospho-PhoP, or inhibit formation of the PhoR-PhoP transitory complex. The chain is Phosphate-specific transport system accessory protein PhoU homolog 1 (phoU1) from Mycobacterium bovis (strain ATCC BAA-935 / AF2122/97).